The following is a 90-amino-acid chain: Small ribosomal subunit protein bS20 (90 aa).

It belongs to the bacterial ribosomal protein bS20 family.

Its function is as follows. Binds directly to 16S ribosomal RNA. This Rickettsia canadensis (strain McKiel) protein is Small ribosomal subunit protein bS20.